Reading from the N-terminus, the 165-residue chain is Urease accessory protein UreE (165 aa).

The interval 137–156 (EAGAYQSAPHGHSHAHGHDH) is disordered.

Belongs to the UreE family.

Its subcellular location is the cytoplasm. Involved in urease metallocenter assembly. Binds nickel. Probably functions as a nickel donor during metallocenter assembly. This Pseudomonas putida (strain GB-1) protein is Urease accessory protein UreE.